The primary structure comprises 505 residues: Trans-cinnamate 4-monooxygenase (505 aa).

The chain crosses the membrane as a helical span at residues 3–23 (LLLLEKTLLALFLAAITAITI). Residues 213–218 (RSRLAQ) and Ala-306 contribute to the (E)-cinnamate site. Cys-447 contacts heme.

Belongs to the cytochrome P450 family. Requires heme as cofactor.

It localises to the membrane. The catalysed reaction is (E)-cinnamate + reduced [NADPH--hemoprotein reductase] + O2 = (E)-4-coumarate + oxidized [NADPH--hemoprotein reductase] + H2O + H(+). It functions in the pathway phenylpropanoid metabolism; trans-4-coumarate biosynthesis; trans-4-coumarate from trans-cinnamate: step 1/1. Its function is as follows. Catalyzes the first oxidative step of the phenylpropanoid pathway in higher plants by transforming trans-cinnamate into p-coumarate. The compounds formed by this pathway are essential components for lignification, pollination, and defense against ultraviolet light, predators and pathogens. The protein is Trans-cinnamate 4-monooxygenase (CYP73A9) of Pisum sativum (Garden pea).